We begin with the raw amino-acid sequence, 114 residues long: uncharacterized protein (114 aa).

May be associated with transposition functions of transposon Tn903. This is an uncharacterized protein from Escherichia coli.